Consider the following 530-residue polypeptide: Phosphoenolpyruvate carboxykinase (ATP) (530 aa).

Residues arginine 56, tyrosine 196, and lysine 202 each coordinate substrate. ATP is bound by residues lysine 202, histidine 221, and 237 to 245; that span reads GLSGTGKTT. Residues lysine 202 and histidine 221 each coordinate Mn(2+). Mn(2+) is bound at residue aspartate 258. Residues glutamate 286, arginine 322, 438 to 439, and threonine 444 each bind ATP; that span reads RI. A substrate-binding site is contributed by arginine 322.

It belongs to the phosphoenolpyruvate carboxykinase (ATP) family. Monomer. It depends on Mn(2+) as a cofactor.

The protein resides in the cytoplasm. The catalysed reaction is oxaloacetate + ATP = phosphoenolpyruvate + ADP + CO2. It functions in the pathway carbohydrate biosynthesis; gluconeogenesis. Involved in the gluconeogenesis. Catalyzes the conversion of oxaloacetate (OAA) to phosphoenolpyruvate (PEP) through direct phosphoryl transfer between the nucleoside triphosphate and OAA. This Photobacterium profundum (strain SS9) protein is Phosphoenolpyruvate carboxykinase (ATP).